We begin with the raw amino-acid sequence, 258 residues long: MERLTIVKVGGEIIRIPEVRDSFLKDFSIIAGYKILVHGGGSMLTELARNLDIETQMIDGRRVTTEKILKLAVMVYAGLINKEIVVGLQALGVDALGFTGADSNIICSEKRPIRDSIDYGLVGDIQEINVQLLNEFLNKGHTPIFAPITHNGGGQLLNTNADSIAGELAKVLVYDYNVRLVYCFDKKGVLYDEGDENSFISVLSYTDFQRYKENGIIGGGMLPKLDSAFNALSAGVKEVIITCASNIKHTGSGTHLKL.

Residues 40–41, arginine 62, and asparagine 158 each bind substrate; that span reads GG.

This sequence belongs to the acetylglutamate kinase family. ArgB subfamily.

Its subcellular location is the cytoplasm. The enzyme catalyses N-acetyl-L-glutamate + ATP = N-acetyl-L-glutamyl 5-phosphate + ADP. It functions in the pathway amino-acid biosynthesis; L-arginine biosynthesis; N(2)-acetyl-L-ornithine from L-glutamate: step 2/4. Functionally, catalyzes the ATP-dependent phosphorylation of N-acetyl-L-glutamate. The polypeptide is Acetylglutamate kinase (Azobacteroides pseudotrichonymphae genomovar. CFP2).